We begin with the raw amino-acid sequence, 497 residues long: 3-octaprenyl-4-hydroxybenzoate carboxy-lyase (497 aa).

Asn175 contributes to the Mn(2+) binding site. Prenylated FMN contacts are provided by residues 178–180, 192–194, and 197–198; these read IYR, RWL, and RG. Glu241 contacts Mn(2+). Asp290 (proton donor) is an active-site residue.

It belongs to the UbiD family. In terms of assembly, homohexamer. Prenylated FMN is required as a cofactor. It depends on Mn(2+) as a cofactor.

The protein resides in the cell membrane. The catalysed reaction is a 4-hydroxy-3-(all-trans-polyprenyl)benzoate + H(+) = a 2-(all-trans-polyprenyl)phenol + CO2. Its pathway is cofactor biosynthesis; ubiquinone biosynthesis. Catalyzes the decarboxylation of 3-octaprenyl-4-hydroxy benzoate to 2-octaprenylphenol, an intermediate step in ubiquinone biosynthesis. This Shigella flexneri protein is 3-octaprenyl-4-hydroxybenzoate carboxy-lyase.